A 347-amino-acid chain; its full sequence is Anthranilate phosphoribosyltransferase (347 aa).

5-phospho-alpha-D-ribose 1-diphosphate is bound by residues glycine 88, 91–92 (GD), threonine 96, 98–101 (NIST), 116–124 (KHGNRSVSS), and serine 128. Anthranilate is bound at residue glycine 88. Serine 100 provides a ligand contact to Mg(2+). Anthranilate is bound at residue asparagine 119. Anthranilate is bound at residue arginine 174. Residues aspartate 232 and glutamate 233 each contribute to the Mg(2+) site.

It belongs to the anthranilate phosphoribosyltransferase family. Homodimer. Mg(2+) serves as cofactor.

The enzyme catalyses N-(5-phospho-beta-D-ribosyl)anthranilate + diphosphate = 5-phospho-alpha-D-ribose 1-diphosphate + anthranilate. It participates in amino-acid biosynthesis; L-tryptophan biosynthesis; L-tryptophan from chorismate: step 2/5. Functionally, catalyzes the transfer of the phosphoribosyl group of 5-phosphorylribose-1-pyrophosphate (PRPP) to anthranilate to yield N-(5'-phosphoribosyl)-anthranilate (PRA). In Shewanella sp. (strain MR-7), this protein is Anthranilate phosphoribosyltransferase.